The following is a 216-amino-acid chain: Inorganic pyrophosphatase (216 aa).

Substrate-binding residues include K39, R53, and Y65. Mg(2+)-binding residues include D93, D98, and D131. Y168 contributes to the substrate binding site.

Belongs to the PPase family. In terms of assembly, homohexamer. Mg(2+) serves as cofactor.

It localises to the cytoplasm. It catalyses the reaction diphosphate + H2O = 2 phosphate + H(+). In terms of biological role, catalyzes the hydrolysis of inorganic pyrophosphate (PPi) forming two phosphate ions. The chain is Inorganic pyrophosphatase from Chlamydia caviae (strain ATCC VR-813 / DSM 19441 / 03DC25 / GPIC) (Chlamydophila caviae).